Consider the following 442-residue polypeptide: N-acetyl-S-alkylcysteine sulfoxide monooxygenase (442 aa).

FMN is bound by residues D58, T95, H145, Y149, S219, and S220.

Belongs to the NtaA/SnaA/DszA monooxygenase family. In terms of assembly, homodimer.

The enzyme catalyses (R)-N-acetyl-S-benzyl-L-cysteine sulfoxide + FMNH2 + O2 = N-acetyl-S-hydroxy-L-cysteine + benzaldehyde + FMN + H2O + H(+). Its pathway is amino-acid metabolism. In terms of biological role, involved in a cysteine salvage pathway from S-alkylcysteine. Catalyzes the C-S bond cleavage in N-acetyl-S-benzyl-L-cysteine sulfoxide leading to N-acetyl-S-hydroxy-L-cysteine and benzaldehyde. This pathway is likely important in the catabolism of alkylated cysteine generated by proteolysis of alkylated glutathione formed in the detoxification of a wide range of electrophiles. Has much less efficient activity with N-acetyl-S-methyl-L-cysteine sulfoxide as substrate. Cannot use S-alkylated L-cysteine sulfones and ketone analogs as substrates, demonstrating that the sulfoxide is required for activity. The sequence is that of N-acetyl-S-alkylcysteine sulfoxide monooxygenase from Bacillus subtilis (strain 168).